A 94-amino-acid chain; its full sequence is Cell division protein FtsB (94 aa).

Over Met-1–Trp-3 the chain is Cytoplasmic. A helical transmembrane segment spans residues Leu-4–Val-21. The Periplasmic segment spans residues Gly-22–Lys-94. Residues Glu-31–Phe-73 adopt a coiled-coil conformation.

This sequence belongs to the FtsB family. Part of a complex composed of FtsB, FtsL and FtsQ.

Its subcellular location is the cell inner membrane. Functionally, essential cell division protein. May link together the upstream cell division proteins, which are predominantly cytoplasmic, with the downstream cell division proteins, which are predominantly periplasmic. The chain is Cell division protein FtsB from Dechloromonas aromatica (strain RCB).